We begin with the raw amino-acid sequence, 307 residues long: Universal stress protein A family protein C25B2.10 (307 aa).

The segment at 1–63 (MSESAPAGSK…RSSMEQPTFR (63 aa)) is disordered. A compositionally biased stretch (basic and acidic residues) spans 21 to 30 (PEPRTSKDQQ). Residue S44 is modified to Phosphoserine. T48 bears the Phosphothreonine mark. 2 positions are modified to phosphoserine: S98 and S102.

It belongs to the universal stress protein A family.

The protein localises to the barrier septum. The protein resides in the cell tip. This Schizosaccharomyces pombe (strain 972 / ATCC 24843) (Fission yeast) protein is Universal stress protein A family protein C25B2.10.